The sequence spans 382 residues: Galactose-1-phosphate uridylyltransferase (382 aa).

Residues cysteine 52 and cysteine 55 each coordinate Zn(2+). Residues alanine 61 and asparagine 77 to aspartate 78 each bind UDP-alpha-D-glucose. Histidine 121 lines the Zn(2+) pocket. Asparagine 185 is a binding site for UDP-alpha-D-glucose. Histidine 196 provides a ligand contact to Zn(2+). The active-site Tele-UMP-histidine intermediate is histidine 198. Glutamine 200 serves as a coordination point for UDP-alpha-D-glucose. The Fe cation site is built by glutamate 214, histidine 313, histidine 330, and histidine 332. Residues lysine 345–valine 348 and phenylalanine 350–glutamate 351 each bind UDP-alpha-D-glucose.

Belongs to the galactose-1-phosphate uridylyltransferase type 1 family. As to quaternary structure, homodimer. It depends on Zn(2+) as a cofactor.

It catalyses the reaction alpha-D-galactose 1-phosphate + UDP-alpha-D-glucose = alpha-D-glucose 1-phosphate + UDP-alpha-D-galactose. Its pathway is carbohydrate metabolism; galactose metabolism. Essential for growth on galactose but not for cellulase induction. This Hypocrea jecorina (Trichoderma reesei) protein is Galactose-1-phosphate uridylyltransferase (gal7).